Reading from the N-terminus, the 962-residue chain is Glycine dehydrogenase (decarboxylating) (962 aa).

The residue at position 709 (K709) is an N6-(pyridoxal phosphate)lysine.

It belongs to the GcvP family. The glycine cleavage system is composed of four proteins: P, T, L and H. Pyridoxal 5'-phosphate serves as cofactor.

It catalyses the reaction N(6)-[(R)-lipoyl]-L-lysyl-[glycine-cleavage complex H protein] + glycine + H(+) = N(6)-[(R)-S(8)-aminomethyldihydrolipoyl]-L-lysyl-[glycine-cleavage complex H protein] + CO2. Its function is as follows. The glycine cleavage system catalyzes the degradation of glycine. The P protein binds the alpha-amino group of glycine through its pyridoxal phosphate cofactor; CO(2) is released and the remaining methylamine moiety is then transferred to the lipoamide cofactor of the H protein. This is Glycine dehydrogenase (decarboxylating) from Shewanella baltica (strain OS195).